A 460-amino-acid polypeptide reads, in one-letter code: Elongation factor 1-alpha (460 aa).

N,N,N-trimethylglycine is present on Gly2. Lys3 carries the N6,N6-dimethyllysine; alternate modification. Lys3 carries the N6-methyllysine; alternate modification. In terms of domain architecture, tr-type G spans 5–240 (KLHVNVVVIG…DAIEPPVRPS (236 aa)). The G1 stretch occupies residues 14–21 (GHVDSGKS). 14-21 (GHVDSGKS) is a GTP binding site. An N6-methyllysine modification is found at Lys30. Residues 70-74 (GITID) form a G2 region. At Lys79 the chain carries N6,N6,N6-trimethyllysine. The segment at 91–94 (DAPG) is G3. Residues 91–95 (DAPGH) and 153–156 (NKMD) each bind GTP. Positions 153–156 (NKMD) are G4. The interval 192-194 (SGW) is G5. Lys316 carries the post-translational modification N6,N6-dimethyllysine; alternate. Lys316 is modified (N6-methyllysine; alternate). N6-methyllysine is present on Lys390.

It belongs to the TRAFAC class translation factor GTPase superfamily. Classic translation factor GTPase family. EF-Tu/EF-1A subfamily.

It is found in the cytoplasm. Its function is as follows. This protein promotes the GTP-dependent binding of aminoacyl-tRNA to the A-site of ribosomes during protein biosynthesis. This is Elongation factor 1-alpha (TEF1) from Schizophyllum commune (Split gill fungus).